Here is a 194-residue protein sequence, read N- to C-terminus: MLASGSTARARMLEQAGIAFTVDVAAVDEEAVKHSMAAETRNPARVAEILAELKAVRVSARHPGALVIGADQMLDCDNVWFDKPADRQGARAQLLALRHKTHRLTSAVVAVRDGRRVWHHTEAAKLTMRNFSENFLDGYLDQAGEAVQTSVGAYQLEGLGSQLFLSVEGDFFTILGLPLLALMDFLRENGELVP.

Asp71 (proton acceptor) is an active-site residue.

This sequence belongs to the Maf family. Requires a divalent metal cation as cofactor.

It localises to the cytoplasm. The catalysed reaction is a ribonucleoside 5'-triphosphate + H2O = a ribonucleoside 5'-phosphate + diphosphate + H(+). It catalyses the reaction a 2'-deoxyribonucleoside 5'-triphosphate + H2O = a 2'-deoxyribonucleoside 5'-phosphate + diphosphate + H(+). Nucleoside triphosphate pyrophosphatase. May have a dual role in cell division arrest and in preventing the incorporation of modified nucleotides into cellular nucleic acids. This is Nucleoside triphosphate pyrophosphatase from Paramagnetospirillum magneticum (strain ATCC 700264 / AMB-1) (Magnetospirillum magneticum).